Reading from the N-terminus, the 380-residue chain is Erythronate-4-phosphate dehydrogenase (380 aa).

The substrate site is built by Ser-45 and Thr-66. Residues Asp-146, Thr-174, 205-207, and Asp-231 contribute to the NAD(+) site; that span reads ASR. The active site involves Arg-207. The active site involves Glu-236. The active-site Proton donor is the His-253. An NAD(+)-binding site is contributed by Gly-256. Residue Tyr-257 participates in substrate binding.

This sequence belongs to the D-isomer specific 2-hydroxyacid dehydrogenase family. PdxB subfamily. Homodimer.

It is found in the cytoplasm. It carries out the reaction 4-phospho-D-erythronate + NAD(+) = (R)-3-hydroxy-2-oxo-4-phosphooxybutanoate + NADH + H(+). The protein operates within cofactor biosynthesis; pyridoxine 5'-phosphate biosynthesis; pyridoxine 5'-phosphate from D-erythrose 4-phosphate: step 2/5. In terms of biological role, catalyzes the oxidation of erythronate-4-phosphate to 3-hydroxy-2-oxo-4-phosphonooxybutanoate. The chain is Erythronate-4-phosphate dehydrogenase from Pseudomonas putida (strain ATCC 700007 / DSM 6899 / JCM 31910 / BCRC 17059 / LMG 24140 / F1).